A 292-amino-acid chain; its full sequence is Lipoyl synthase (292 aa).

Residues C34, C39, C45, C60, C64, C67, and S273 each contribute to the [4Fe-4S] cluster site. The 217-residue stretch at 46–262 (WNKKHATVMI…KYVAYSKGFL (217 aa)) folds into the Radical SAM core domain.

It belongs to the radical SAM superfamily. Lipoyl synthase family. [4Fe-4S] cluster is required as a cofactor.

The protein localises to the cytoplasm. It carries out the reaction [[Fe-S] cluster scaffold protein carrying a second [4Fe-4S](2+) cluster] + N(6)-octanoyl-L-lysyl-[protein] + 2 oxidized [2Fe-2S]-[ferredoxin] + 2 S-adenosyl-L-methionine + 4 H(+) = [[Fe-S] cluster scaffold protein] + N(6)-[(R)-dihydrolipoyl]-L-lysyl-[protein] + 4 Fe(3+) + 2 hydrogen sulfide + 2 5'-deoxyadenosine + 2 L-methionine + 2 reduced [2Fe-2S]-[ferredoxin]. It functions in the pathway protein modification; protein lipoylation via endogenous pathway; protein N(6)-(lipoyl)lysine from octanoyl-[acyl-carrier-protein]: step 2/2. In terms of biological role, catalyzes the radical-mediated insertion of two sulfur atoms into the C-6 and C-8 positions of the octanoyl moiety bound to the lipoyl domains of lipoate-dependent enzymes, thereby converting the octanoylated domains into lipoylated derivatives. The chain is Lipoyl synthase from Ehrlichia ruminantium (strain Welgevonden).